Reading from the N-terminus, the 103-residue chain is Large ribosomal subunit protein bL21 (103 aa).

This sequence belongs to the bacterial ribosomal protein bL21 family. Part of the 50S ribosomal subunit. Contacts protein L20.

This protein binds to 23S rRNA in the presence of protein L20. This chain is Large ribosomal subunit protein bL21, found in Acinetobacter baumannii (strain AB307-0294).